The chain runs to 325 residues: GMP reductase (325 aa).

Cys-173 serves as the catalytic Thioimidate intermediate. NADP(+) is bound at residue 202–225; that stretch reads IIADGGIHEHGDIAKSIRFGATMV.

The protein belongs to the IMPDH/GMPR family. GuaC type 2 subfamily.

It catalyses the reaction IMP + NH4(+) + NADP(+) = GMP + NADPH + 2 H(+). In terms of biological role, catalyzes the irreversible NADPH-dependent deamination of GMP to IMP. It functions in the conversion of nucleobase, nucleoside and nucleotide derivatives of G to A nucleotides, and in maintaining the intracellular balance of A and G nucleotides. This Albidiferax ferrireducens (strain ATCC BAA-621 / DSM 15236 / T118) (Rhodoferax ferrireducens) protein is GMP reductase.